The sequence spans 744 residues: MATHERKTIDLEQGWEFMQKGITKLKNILEGKPEPQFSSEDYMMLYTTIYNMCTQKPPHDYSQQLYEKYRESFEEYITSMVLPSLREKHDEFMLRELVKRWSNHKVMVRWLSRFFHYLDRYFISRRSLPQLSEVGLSCFRDLVYQEIKGKVKSAVISLIDQEREGEQIDRALLKNVLDIFVEIGLTSMDYYENDFEDFLLKDTADYYSIKAQTWILEDSCPDYMLKAEECLKREKERVAHYLHSSSEQKLLEKVQHELLTQYASQLLEKEHSGCHALLRDDKVDDLSRMYRLFSRITRGLEPVSQIFKQHVTNEGTALVKQAEDAASNKKPEKKEIVGLQEQVFVRKIIELHDKYVAYVTDCFQGHTLFHKALKEAFEVFCNKGVSGSSSAELLATFCDNILKKGGSEKLSDEAIEDTLEKVVRLLAYISDKDLFAEFYRKKLARRLLFDKSANDEHERSILTKLKQQCGGQFTSKMEGMVTDLTVARDHQAKFEEFISTHSELNPGIALAVTVLTTGFWPSYKSFDINLPAEMVKCVEVFKEFYQTRTKHRKLTWIYSLGTCNINAKFEAKTIELIVTTYQAALLLLFNGVDRLSYSEIVTQLNLSDDDVVRLLHSLSCAKYKILSKEPNNRSISPNDVFEFNSKFTDKLRRLKIPLPPVDEKKKVVEDVDKDRRYAIDASIVRIMKSRKVLGHQQLVMECVEQLGRMFKPDFKAIKKRIEDLITRDYLERDKDNPNVYRYLA.

The Cullin neddylation domain maps to 674–736; sequence DRRYAIDASI…RDYLERDKDN (63 aa).

This sequence belongs to the cullin family. As to quaternary structure, part of a SCF (SKP1-CUL1-F-box protein) E3 ubiquitin-protein ligase complex. Is able to form the SCF complex together with SKP1 and the rice black streaked dwarf virus RBSDV protein P7-2. Interacts with D3. Neddylated (rubylated). Deneddylation occurs upon interaction with the COP9 signalosome (CSN) complex. In terms of tissue distribution, expressed in dry seeds and coleoptiles.

Functionally, involved in ubiquitination and subsequent proteasomal degradation of target proteins. The polypeptide is Cullin-1 (Oryza sativa subsp. japonica (Rice)).